Here is a 376-residue protein sequence, read N- to C-terminus: tRNA 2-selenouridine synthase (376 aa).

The Rhodanese domain maps to 15–138 (FVAGKPLIDL…MRQYLIGVIE (124 aa)). The S-selanylcysteine intermediate role is filled by Cys98.

The protein belongs to the SelU family. In terms of assembly, monomer.

The catalysed reaction is 5-methylaminomethyl-2-thiouridine(34) in tRNA + selenophosphate + (2E)-geranyl diphosphate + H2O + H(+) = 5-methylaminomethyl-2-selenouridine(34) in tRNA + (2E)-thiogeraniol + phosphate + diphosphate. The enzyme catalyses 5-methylaminomethyl-2-thiouridine(34) in tRNA + (2E)-geranyl diphosphate = 5-methylaminomethyl-S-(2E)-geranyl-thiouridine(34) in tRNA + diphosphate. It catalyses the reaction 5-methylaminomethyl-S-(2E)-geranyl-thiouridine(34) in tRNA + selenophosphate + H(+) = 5-methylaminomethyl-2-(Se-phospho)selenouridine(34) in tRNA + (2E)-thiogeraniol. It carries out the reaction 5-methylaminomethyl-2-(Se-phospho)selenouridine(34) in tRNA + H2O = 5-methylaminomethyl-2-selenouridine(34) in tRNA + phosphate. Functionally, involved in the post-transcriptional modification of the uridine at the wobble position (U34) of tRNA(Lys), tRNA(Glu) and tRNA(Gln). Catalyzes the conversion of 2-thiouridine (S2U-RNA) to 2-selenouridine (Se2U-RNA). Acts in a two-step process involving geranylation of 2-thiouridine (S2U) to S-geranyl-2-thiouridine (geS2U) and subsequent selenation of the latter derivative to 2-selenouridine (Se2U) in the tRNA chain. The protein is tRNA 2-selenouridine synthase of Shewanella oneidensis (strain ATCC 700550 / JCM 31522 / CIP 106686 / LMG 19005 / NCIMB 14063 / MR-1).